Here is a 639-residue protein sequence, read N- to C-terminus: Protein phosphatase EYA4 (639 aa).

An N-acetylmethionine modification is found at Met1. Disordered stretches follow at residues 1–72 (MEDS…GGEN), 210–232 (QTQS…PQPG), and 300–368 (ADGT…DSDL). A Glycyl lysine isopeptide (Lys-Gly) (interchain with G-Cter in SUMO2) cross-link involves residue Lys14. Positions 18-30 (ESDVSQSQNSRSM) are enriched in polar residues. Lys52 is covalently cross-linked (Glycyl lysine isopeptide (Lys-Gly) (interchain with G-Cter in SUMO2)). Over residues 56-66 (SNLSSTSVTTN) the composition is skewed to low complexity. Residues 300-334 (ADGTPSSTSTYQLQESLPGLTNQPGEFDTMQSPST) show a composition bias toward polar residues. Ser361 is modified (phosphoserine). Asp375 acts as the Nucleophile in catalysis. Mg(2+) is bound by residues Asp375, Asp377, and Asp603. The active-site Proton donor is the Asp377.

The protein belongs to the HAD-like hydrolase superfamily. EYA family. In terms of assembly, interacts with SIX3; translocates EYA4 from the cytoplasm to the nucleus and promotes activation of their target genes. Requires Mg(2+) as cofactor. As to expression, highly expressed in heart and skeletal muscle.

It is found in the cytoplasm. Its subcellular location is the nucleus. It carries out the reaction O-phospho-L-tyrosyl-[protein] + H2O = L-tyrosyl-[protein] + phosphate. Its function is as follows. Tyrosine phosphatase that specifically dephosphorylates 'Tyr-142' of histone H2AX (H2AXY142ph). 'Tyr-142' phosphorylation of histone H2AX plays a central role in DNA repair and acts as a mark that distinguishes between apoptotic and repair responses to genotoxic stress. Promotes efficient DNA repair by dephosphorylating H2AX, promoting the recruitment of DNA repair complexes containing MDC1. Its function as histone phosphatase probably explains its role in transcription regulation during organogenesis. May be involved in development of the eye. This is Protein phosphatase EYA4 (EYA4) from Homo sapiens (Human).